We begin with the raw amino-acid sequence, 112 residues long: Probable small nuclear ribonucleoprotein Sm D2 (112 aa).

The span at 1–15 (MSRMNDETMEDKPDD) shows a compositional bias: basic and acidic residues. Residues 1-23 (MSRMNDETMEDKPDDSNGPLSIL) form a disordered region. A Sm domain is found at 20-106 (LSILMDSVNN…VILVLKNPLG (87 aa)).

This sequence belongs to the snRNP core protein family.

Its subcellular location is the nucleus. The protein resides in the cytoplasm. It is found in the cytosol. Functionally, plays a role in pre-mRNA splicing as a core component of the spliceosomal U1, U2, U4 and U5 small nuclear ribonucleoproteins (snRNPs), the building blocks of the spliceosome. The sequence is that of Probable small nuclear ribonucleoprotein Sm D2 (snrpd2) from Dictyostelium discoideum (Social amoeba).